We begin with the raw amino-acid sequence, 311 residues long: Olfactory receptor 14I1 (311 aa).

The Extracellular portion of the chain corresponds to 1-26; it reads MDNLTKVTEFLLMEFSGIWELQVLHA. A glycan (N-linked (GlcNAc...) asparagine) is linked at Asn-3. The chain crosses the membrane as a helical span at residues 27 to 47; that stretch reads GLFLLIYLAVLVGNLLIIAVI. Topologically, residues 48–55 are cytoplasmic; sequence TLDQHLHT. Residues 56–76 form a helical membrane-spanning segment; it reads PMYFFLKNLSVLDLCYISVTV. Residues 77–92 are Extracellular-facing; sequence PKSIRNSLTRRSSISY. Residues 93–113 traverse the membrane as a helical segment; that stretch reads LGCVAQVYFFSAFASAELAFL. A disulfide bridge links Cys-95 with Cys-188. Topologically, residues 114-141 are cytoplasmic; the sequence is TVMSYDRYVAICHPLQYRAVMTSGGCYQ. A helical transmembrane segment spans residues 142–162; the sequence is MAVTTWLSCFSYAAVHTGNMF. Residues 163–189 are Extracellular-facing; the sequence is REHVCRSSVIHQFFRDIPHVLALVSCE. The chain crosses the membrane as a helical span at residues 190–210; it reads VFFVEFLTLALSSCLVLGCFI. Residues 211–241 are Cytoplasmic-facing; that stretch reads LMMISYFQIFSTVLRIPSGQSRAKAFSTCSP. Residues 242–262 form a helical membrane-spanning segment; sequence QLIVIMLFLTTGLFAALGPIA. Over 263 to 269 the chain is Extracellular; it reads KALSIQD. The helical transmembrane segment at 270-290 threads the bilayer; sequence LVIALTYTVLPPFLNPIIYSL. Residues 291 to 311 are Cytoplasmic-facing; the sequence is RNKEIKTAMWRLFVKIYFLQK.

Belongs to the G-protein coupled receptor 1 family.

It localises to the cell membrane. Odorant receptor. The sequence is that of Olfactory receptor 14I1 (OR14I1) from Homo sapiens (Human).